The primary structure comprises 576 residues: Rho GTPase-activating protein gacP (576 aa).

Residues 123–189 adopt a coiled-coil conformation; sequence LKSIIKTELK…RTNFERVGID (67 aa). The Rho-GAP domain maps to 277 to 462; it reads EDLSVLLNRE…TIIQNFDRIF (186 aa). The interval 472 to 576 is disordered; the sequence is VPDTYVPPPN…DEGDAVELSD (105 aa). The segment covering 482-500 has biased composition (low complexity); the sequence is NTRNNSVNNFNNVQPSSFS. Residues 501 to 513 show a composition bias toward polar residues; that stretch reads ASTSRSINLNKST. Residues 514–530 are compositionally biased toward low complexity; it reads NNPNINDDNNNNNNINN. Residues 565–576 show a composition bias toward acidic residues; it reads SFDEGDAVELSD.

It localises to the cytoplasm. In terms of biological role, rho GTPase-activating protein involved in the signal transduction pathway. The polypeptide is Rho GTPase-activating protein gacP (gacP) (Dictyostelium discoideum (Social amoeba)).